The following is a 113-amino-acid chain: Large ribosomal subunit protein bL17 (113 aa).

Belongs to the bacterial ribosomal protein bL17 family. Part of the 50S ribosomal subunit. Contacts protein L32.

This chain is Large ribosomal subunit protein bL17, found in Clostridium botulinum (strain Alaska E43 / Type E3).